A 148-amino-acid polypeptide reads, in one-letter code: Large ribosomal subunit protein uL11 (148 aa).

Residues 89–108 (EKKKGSGAHKPGKEKVGQVT) form a disordered region.

It belongs to the universal ribosomal protein uL11 family. As to quaternary structure, part of the ribosomal stalk of the 50S ribosomal subunit. Interacts with L10 and the large rRNA to form the base of the stalk. L10 forms an elongated spine to which L12 dimers bind in a sequential fashion forming a multimeric L10(L12)X complex. In terms of processing, one or more lysine residues are methylated.

Its function is as follows. Forms part of the ribosomal stalk which helps the ribosome interact with GTP-bound translation factors. This is Large ribosomal subunit protein uL11 from Anaeromyxobacter sp. (strain Fw109-5).